A 216-amino-acid chain; its full sequence is MALSEAAVKVQAALQERGLETPMLPNVFTPEERKDKIEFHMKEILTLMSLDLSDDSLADTPRRIAKMYVDEIFSGLDYENFPKITVIDNKMGFDEMVRVQDISLTSTCEHHLVTIDGTATIAYIPRKKIIGLSKINRIVRFFSQRPQVQERLTQQVLVALQTLLETKDVAVKMDAVHYCVKSRGVMDSTSSTTTTALGGIFKSNPATRAEFLNQSK.

Zn(2+)-binding residues include Cys108, His111, and Cys179.

Belongs to the GTP cyclohydrolase I family. Toroid-shaped homodecamer, composed of two pentamers of five dimers.

It carries out the reaction GTP + H2O = 7,8-dihydroneopterin 3'-triphosphate + formate + H(+). The protein operates within cofactor biosynthesis; 7,8-dihydroneopterin triphosphate biosynthesis; 7,8-dihydroneopterin triphosphate from GTP: step 1/1. This chain is GTP cyclohydrolase 1, found in Shewanella sp. (strain ANA-3).